A 1233-amino-acid polypeptide reads, in one-letter code: Insulin receptor substrate 1 (1233 aa).

A Phosphoserine modification is found at Ser3. The interval 3–133 (SPPDTDGFSD…AGGGCGGSCS (131 aa)) is mediates interaction with PHIP. Residues 12 to 115 (DVRKVGYLRK…WYQALLQLHN (104 aa)) enclose the PH domain. A Phosphoserine; by CK2 modification is found at Ser99. In terms of domain architecture, IRS-type PTB spans 155-259 (FKEVWQVILK…EAMRAMSDEF (105 aa)). The disordered stretch occupies residues 257–425 (DEFRPRSKSQ…SDGGFISSDE (169 aa)). The segment covering 264–276 (KSQSSSSCSNPIS) has biased composition (low complexity). Residues Ser265 and Ser302 each carry the phosphoserine; by RPS6KB1 modification. The residue at position 307 (Ser307) is a Phosphoserine; by IKKB, MAPK8 and RPS6KB1. Phosphoserine is present on residues Ser318, Ser325, Ser340, and Ser343. Residues 349–358 (THAHRHRGSS) show a composition bias toward basic residues. Low complexity-rich tracts occupy residues 378–399 (SPSATSPVSLSSSSTSGHGSTS) and 407–419 (SSASVSGSPSDGG). At Ser414 the chain carries Phosphoserine. Phosphothreonine occurs at positions 441 and 448. A Phosphotyrosine; by INSR modification is found at Tyr460. Residues 460-463 (YICM) carry the YXXM motif 1 motif. At Ser522 the chain carries Phosphoserine; by RPS6KB1. Short sequence motifs (YXXM motif) lie at residues 546–549 (YTEM) and 608–611 (YMPM). Tyr608 carries the phosphotyrosine; by INSR modification. Ser612 bears the Phosphoserine mark. Tyr628 carries the phosphotyrosine; by INSR modification. Positions 628-631 (YMPM) match the YXXM motif 4 motif. At Ser632 the chain carries Phosphoserine; by RPS6KB1 and ROCK2. A disordered region spans residues 651 to 720 (QRVDPNGYMM…PPVESGGGKL (70 aa)). A Phosphotyrosine modification is found at Tyr658. The short motif at 658-661 (YMMM) is the YXXM motif 5 element. The segment covering 662–689 (SPSGSCSPDIGGGSSSSSSISAAPSGSS) has biased composition (low complexity). Residues 727–730 (YMNM) carry the YXXM motif 6 motif. The disordered stretch occupies residues 766–985 (FKHTQRPGEP…VPNSRGDYMT (220 aa)). The span at 771–780 (RPGEPEEGAR) shows a compositional bias: basic and acidic residues. Composition is skewed to low complexity over residues 785–794 (RLSSSSGRLR) and 801–810 (DSSSSTSSDS). Ser789 is modified (phosphoserine; by AMPK and SIK2). Ser887 is subject to Phosphoserine. A phosphotyrosine; by INSR mark is found at Tyr891, Tyr935, and Tyr983. Positions 891 to 893 (YVN) are GRB2-binding. 3 consecutive short sequence motifs (YXXM motif) follow at residues 935 to 938 (YMNM), 983 to 986 (YMTM), and 1006 to 1009 (YADM). The interval 1015-1137 (AEKASLPRPT…GSEDVKRHSS (123 aa)) is disordered. Residues 1032 to 1042 (STASSSASVTP) are compositionally biased toward low complexity. Composition is skewed to polar residues over residues 1043–1052 (QGATAEQATH) and 1069–1081 (TRVNLSPNHNQSA). 2 positions are modified to phosphoserine: Ser1096 and Ser1097. A compositionally biased stretch (gly residues) spans 1116–1129 (AAVGGSGGGGGGGS). Phosphotyrosine; by INSR is present on Tyr1173. The disordered stretch occupies residues 1178-1233 (LAKEHSQDCPSQQQSLPPPPPHQPLGSNEGNSPRRSSEDLSNYASISFQKQPEDRQ). Lys1180 participates in a covalent cross-link: Glycyl lysine isopeptide (Lys-Gly) (interchain with G-Cter in ubiquitin). Positions 1203–1227 (GSNEGNSPRRSSEDLSNYASISFQK) are enriched in polar residues. A Phosphotyrosine; by INSR modification is found at Tyr1220.

As to quaternary structure, interacts (via phosphorylated YXXM motifs) with PIK3R1. Interacts with ROCK1. Interacts with GRB2. Interacts with SOCS7. Interacts (via IRS-type PTB domain) with IGF1R and INSR (via the tyrosine-phosphorylated NPXY motif). Interacts with UBTF and PIK3CA. Interacts (via PH domain) with PHIP. Interacts with FER. Interacts with ALK. Interacts with EIF2AK2/PKR. Interacts with GKAP1. Interacts with DGKZ in the absence of insulin; insulin stimulation decreases this interaction. Found in a ternary complex with DGKZ and PIP5K1A in the absence of insulin stimulation. Interacts with SQSTM1; the interaction is disrupted by the presence of tensin TNS2. Interacts with NCK1 (via SH2 domain). Interacts with NCK2 (via SH3 domain). Interacts with SH2B1; this interaction enhances leptin-induced activation of the PI3-kinase pathway. Interacts with DVL2; this interaction promotes the Wnt/beta-catenin signaling pathway. Serine phosphorylation of IRS1 is a mechanism for insulin resistance. Ser-307 phosphorylation inhibits insulin action through disruption of IRS1 interaction with the insulin receptor. Phosphorylation of Tyr-891 is required for GRB2-binding. Phosphorylated by ALK. Phosphorylated at Ser-265, Ser-302, Ser-632 and Ser-1097 by RPS6KB1; phosphorylation induces accelerated degradation of IRS1. Phosphorylated on tyrosine residues in response to insulin. In skeletal muscles, dephosphorylated on Tyr-608 by TNS2 under anabolic conditions; dephosphorylation results in the proteasomal degradation of IRS1. In terms of processing, ubiquitinated by the Cul7-RING(FBXW8) complex in a mTOR-dependent manner, leading to its degradation: the Cul7-RING(FBXW8) complex recognizes and binds IRS1 previously phosphorylated by S6 kinase (RPS6KB1 or RPS6KB2). Ubiquitinated by TRAF4 through 'Lys-29' linkage; this ubiquitination regulates the interaction of IRS1 with IGFR and IRS1 tyrosine phosphorylation upon IGF1 stimulation. Post-translationally, S-nitrosylation at by BLVRB inhibits its activity. As to expression, expressed in osteoblasts, but not in osteoclasts.

It localises to the cytoplasm. The protein resides in the nucleus. Its function is as follows. Signaling adapter protein that participates in the signal transduction from two prominent receptor tyrosine kinases, insulin receptor/INSR and insulin-like growth factor I receptor/IGF1R. Plays therefore an important role in development, growth, glucose homeostasis as well as lipid metabolism. Upon phosphorylation by the insulin receptor, functions as a signaling scaffold that propagates insulin action through binding to SH2 domain-containing proteins including the p85 regulatory subunit of PI3K, NCK1, NCK2, GRB2 or SHP2. Recruitment of GRB2 leads to the activation of the guanine nucleotide exchange factor SOS1 which in turn triggers the Ras/Raf/MEK/MAPK signaling cascade. Activation of the PI3K/AKT pathway is responsible for most of insulin metabolic effects in the cell, and the Ras/Raf/MEK/MAPK is involved in the regulation of gene expression and in cooperation with the PI3K pathway regulates cell growth and differentiation. Acts a positive regulator of the Wnt/beta-catenin signaling pathway through suppression of DVL2 autophagy-mediated degradation leading to cell proliferation. This chain is Insulin receptor substrate 1 (Irs1), found in Mus musculus (Mouse).